A 390-amino-acid chain; its full sequence is MPVIKGPQVFPRAEFLRRLNAVKLEMGRLEIDALIVGSSADITYLTGYTAKSGYVPQALVISSNDEEPTFILRRQDAPAAIHQTFMDRDKVIGYSEALIGNPDKDGYDAVVDFLNERDGANKRGVGVQLGYLSVRSAEKFKTRLPSARIVDCTHSVAWIRMIKSDLEISMMRDAAAIADAGVQKAFEVIRPGVREADVMADVAAQLARGTNGKAGTDLASMYFCSSPRTGTCHIRWSEDVIRDGSQINLEIAGVRHGYVSAIMRTFSVGAPSDRLRRIHDAEVLGLEAALSTVKPGATCSDVANAFYRTIEKSGFQKDSRCGYAIGIDWSEPTASLKDGDMTKLKPNMTFHLMLGNWIEEDFGYVLSETFRVTEAGCEVLTKSPRQLCVI.

It belongs to the peptidase M24 family.

This is an uncharacterized protein from Sinorhizobium fredii (strain NBRC 101917 / NGR234).